The primary structure comprises 1147 residues: Nucleolar protein 6 (1147 aa).

The disordered stretch occupies residues 1–49 (MQKKRSRAGAAEQEAASDDGEMSDSSDKMEVSQNKGKSGIKRAPEADDV). Acidic residues predominate over residues 15–24 (AASDDGEMSD).

It belongs to the NRAP family. In terms of assembly, part of the small subunit (SSU) processome, composed of more than 70 proteins and the RNA chaperone small nucleolar RNA (snoRNA) U3.

Its subcellular location is the nucleus. The protein localises to the nucleolus. It localises to the chromosome. Its function is as follows. Part of the small subunit (SSU) processome, first precursor of the small eukaryotic ribosomal subunit. During the assembly of the SSU processome in the nucleolus, many ribosome biogenesis factors, an RNA chaperone and ribosomal proteins associate with the nascent pre-rRNA and work in concert to generate RNA folding, modifications, rearrangements and cleavage as well as targeted degradation of pre-ribosomal RNA by the RNA exosome. In Xenopus laevis (African clawed frog), this protein is Nucleolar protein 6 (nol6).